Reading from the N-terminus, the 61-residue chain is Large ribosomal subunit protein uL30 (61 aa).

This sequence belongs to the universal ribosomal protein uL30 family. In terms of assembly, part of the 50S ribosomal subunit.

This is Large ribosomal subunit protein uL30 from Treponema denticola (strain ATCC 35405 / DSM 14222 / CIP 103919 / JCM 8153 / KCTC 15104).